The following is a 107-amino-acid chain: MMTESEFIRASEALFEHIEDQIDENGWDFDCRFAGNVLTIEAGDGAQIIVNRHTPNQELWIAAKSGGYHFAEQNGKWLATRDGRDFYDVLNEALSAASGEAVEIAEL.

Belongs to the frataxin family.

Involved in iron-sulfur (Fe-S) cluster assembly. May act as a regulator of Fe-S biogenesis. This chain is Iron-sulfur cluster assembly protein CyaY, found in Neisseria meningitidis serogroup B (strain ATCC BAA-335 / MC58).